A 442-amino-acid chain; its full sequence is tRNA modification GTPase MnmE (442 aa).

Arg-21, Glu-79, and Lys-118 together coordinate (6S)-5-formyl-5,6,7,8-tetrahydrofolate. The region spanning 215-365 (GLKIAIVGKP…LENKLSSYCN (151 aa)) is the TrmE-type G domain. GTP contacts are provided by residues 225-230 (NVGKSS), 244-250 (TNEAGTT), and 269-272 (DTAG). 2 residues coordinate Mg(2+): Ser-229 and Thr-250. (6S)-5-formyl-5,6,7,8-tetrahydrofolate is bound at residue Lys-442.

Belongs to the TRAFAC class TrmE-Era-EngA-EngB-Septin-like GTPase superfamily. TrmE GTPase family. As to quaternary structure, homodimer. Heterotetramer of two MnmE and two MnmG subunits. The cofactor is K(+).

Its subcellular location is the cytoplasm. Exhibits a very high intrinsic GTPase hydrolysis rate. Involved in the addition of a carboxymethylaminomethyl (cmnm) group at the wobble position (U34) of certain tRNAs, forming tRNA-cmnm(5)s(2)U34. This chain is tRNA modification GTPase MnmE, found in Mycoplasma mobile (strain ATCC 43663 / 163K / NCTC 11711) (Mesomycoplasma mobile).